The following is a 1157-amino-acid chain: Zinc finger protein 516 (1157 aa).

Residues 1–13 (MDRSREAEMELRR) show a composition bias toward basic and acidic residues. Residues 1–26 (MDRSREAEMELRRGPSPPRAGRSHEV) form a disordered region. The segment at 1–420 (MDRSREAEME…ATRGKVAEPA (420 aa)) is mediates promoter DNA-binding and activation of transcription. 7 C2H2-type zinc fingers span residues 34 to 56 (HSCC…MRKH), 62 to 84 (YKCP…IRSH), 162 to 185 (VPCS…HQAH), 188 to 211 (FKCR…ERDH), 236 to 258 (FPCE…MKKH), 264 to 286 (HGCH…MKAH), and 323 to 345 (EVCT…NAIH). The span at 449-458 (SQEKRKREQD) shows a compositional bias: basic and acidic residues. Disordered regions lie at residues 449 to 503 (SQEK…QGKS) and 523 to 653 (SRVH…KGPE). Polar residues predominate over residues 494–503 (ASATTGQGKS). The C2H2-type 8 zinc-finger motif lies at 504 to 526 (SECFECGKIFRTYHQMVLHSRVH). The span at 531 to 541 (RDRDPEGDRAA) shows a compositional bias: basic and acidic residues. The span at 550 to 561 (EGDSASQPSSPG) shows a compositional bias: polar residues. The span at 575–585 (EVVDDSGEEAV) shows a compositional bias: acidic residues. Residues 601 to 612 (GEVTPTALSNGD) show a composition bias toward polar residues. K630 is covalently cross-linked (Glycyl lysine isopeptide (Lys-Gly) (interchain with G-Cter in SUMO2)). Positions 644–653 (SSRETTKGPE) are enriched in basic and acidic residues. K669 participates in a covalent cross-link: Glycyl lysine isopeptide (Lys-Gly) (interchain with G-Cter in SUMO2). A C2H2-type 9; atypical zinc finger spans residues 753–776 (HPCPYCTHKTYYPEVLWMHKRIWH). 2 disordered regions span residues 831 to 996 (TQVP…EPSV) and 1013 to 1040 (RGEA…AEGQ). Polar residues predominate over residues 914 to 928 (GSGSLSRSTTPTPSV). Residues K1032 and K1051 each participate in a glycyl lysine isopeptide (Lys-Gly) (interchain with G-Cter in SUMO2) cross-link. Residues 1092 to 1114 (FVCVECGKSFHQPSQLRAHLRAH) form a C2H2-type 10 zinc finger. A disordered region spans residues 1123–1157 (PRDSEVHTASTDAPKQGRDHTTPGTVPAGPLRKGI).

It belongs to the krueppel C2H2-type zinc-finger protein family. As to quaternary structure, interacts with PRDM16; the interaction is direct and may play a role in the transcription of brown adipose tissue-specific genes. Interacts with PWWP2B. Interacts with HDAC1; this interaction is enhanced in the presence of PWWP2B. In terms of tissue distribution, expressed by adipocytes more specifically in brown adipose tissue compared to white adipose tissue (WAT).

It localises to the nucleus. Functionally, transcriptional regulator that binds to the promoter and activates the transcription of genes promoting brown adipose tissue (BAT) differentiation. Among brown adipose tissue-specific genes, binds the proximal region of the promoter of the UCP1 gene to activate its transcription and thereby regulate thermogenesis. May also play a role in the cellular response to replication stress. The polypeptide is Zinc finger protein 516 (Mus musculus (Mouse)).